Reading from the N-terminus, the 183-residue chain is UPF0340 protein LCA_1354 (183 aa).

Belongs to the UPF0340 family.

The polypeptide is UPF0340 protein LCA_1354 (Latilactobacillus sakei subsp. sakei (strain 23K) (Lactobacillus sakei subsp. sakei)).